A 140-amino-acid chain; its full sequence is Large ribosomal subunit protein uL16c (140 aa).

This sequence belongs to the universal ribosomal protein uL16 family. In terms of assembly, part of the 50S ribosomal subunit.

It is found in the plastid. The protein localises to the chloroplast. The polypeptide is Large ribosomal subunit protein uL16c (Psilotum nudum (Whisk fern)).